The following is a 981-amino-acid chain: NAD(+) hydrolase tir-1 (981 aa).

Disordered regions lie at residues 1–31 (MLPN…RSLK), 74–128 (QNEQ…PTQP), and 173–225 (LSTP…PVDQ). 2 stretches are compositionally biased toward polar residues: residues 12-23 (PSFQSLNNNNQR) and 74-85 (QNEQDGETTSTD). The span at 87 to 97 (AFFELDDDDDL) shows a compositional bias: acidic residues. Over residues 98 to 114 (SSPSVPGSPVDPPSISV) the composition is skewed to low complexity. Over residues 115 to 128 (PLPPKSAPPCPTQP) the composition is skewed to pro residues. Positions 182 to 200 (EEMHNGQVRKESEYRRFKS) are enriched in basic and acidic residues. SAM domains are found at residues 614–678 (WTCA…LKVA) and 684–750 (VDES…AKHP). Residues 760–857 (KQIDVFISYR…EHQKNIIPIF (98 aa)) enclose the TIR domain. Residue 769-770 (RR) participates in NAD(+) binding. Residue glutamate 842 is part of the active site. Composition is skewed to polar residues over residues 908-939 (TTPT…TGPS), 954-963 (FTPTGSQERA), and 972-981 (PSASTTSDRN). Positions 908-981 (TTPTTKEMPS…PSASTTSDRN (74 aa)) are disordered.

It belongs to the SARM1 family. In terms of assembly, homodimer. Interacts with rab-1, pal-1 and unc-43. In terms of tissue distribution, highly expressed in hypodermis. Localizes to postsynaptic regions of axons.

The protein localises to the cytoplasm. It catalyses the reaction NAD(+) + H2O = ADP-D-ribose + nicotinamide + H(+). In terms of biological role, NAD(+) hydrolase, which plays a key role in non-apoptotic cell death by regulating NAD(+) metabolism. In response to stress, homooligomerizes and catalyzes cleavage of NAD(+) into ADP-D-ribose (ADPR) and nicotinamide; NAD(+) cleavage promoting non-apoptotic neuronal cell death. In males, involved in non-apoptotic death of the linker cell which guides gonad elongation during larval development. Required for both innate immune response and specification of AWC(OFF) neuron. During late embryogenesis, it acts downstream of CAMKII (unc-43) to regulate specification of asymmetric odorant receptors in AWC(OFF) neuron via the nsy-1/ASK1 pmk-1/p38 MAP kinase signaling cascade. Required to localize nsy-1 to postsynaptic regions of AWC neuron, suggesting that it may act by assembling a signaling complex that regulate odorant receptor expression. Also plays a central role in resistance to infection to a broad range of bacterial and fungi pathogens, possibly by activating pmk-1, independently of the NF-kappa-B pathway. Required for expression of antimicrobial peptides nlp-29 and nlp-31. Its role in immune response and neuron specification may be mediated by the same nsy-1/ASK1 pmk-1/p38 MAP kinase cascade signaling pathway. Involved in the response to anoxic conditions probably by activating the p38 pathway composed of nsy-1/sek-1/pmk-1. Involved in regulation of the serotonergic response of ADF neurons to pathogenic food. In addition, plays a role in the up-regulation of gcs-1 upon arsenite treatment, most likely through activation of pmk-1, to confer protection against toxicity induced by heavy metals. Regulates expression of antimicrobial peptide nlp-29 in response to fungal infection or physical injury. In Caenorhabditis elegans, this protein is NAD(+) hydrolase tir-1.